The following is a 334-amino-acid chain: DNA-directed RNA polymerase subunit alpha (334 aa).

The alpha N-terminal domain (alpha-NTD) stretch occupies residues 1-234 (MQRSLNEFLT…QQLAVFVDFD (234 aa)). Residues 248–334 (IDPILLRPVD…IRGDDRVLGG (87 aa)) are alpha C-terminal domain (alpha-CTD).

This sequence belongs to the RNA polymerase alpha chain family. As to quaternary structure, homodimer. The RNAP catalytic core consists of 2 alpha, 1 beta, 1 beta' and 1 omega subunit. When a sigma factor is associated with the core the holoenzyme is formed, which can initiate transcription.

The catalysed reaction is RNA(n) + a ribonucleoside 5'-triphosphate = RNA(n+1) + diphosphate. Functionally, DNA-dependent RNA polymerase catalyzes the transcription of DNA into RNA using the four ribonucleoside triphosphates as substrates. This Hahella chejuensis (strain KCTC 2396) protein is DNA-directed RNA polymerase subunit alpha.